The primary structure comprises 47 residues: Zinc-finger protein TK0143 (47 aa).

The segment at 18-41 (FRCPRCGMVFRSAKAYTRHVNKAH) adopts a C2H2-type zinc-finger fold. Zn(2+)-binding residues include C20, C23, H36, and H41.

As to quaternary structure, crystallized in association with 70S ribosomes. Requires Zn(2+) as cofactor.

This chain is Zinc-finger protein TK0143, found in Thermococcus kodakarensis (strain ATCC BAA-918 / JCM 12380 / KOD1) (Pyrococcus kodakaraensis (strain KOD1)).